The following is a 194-amino-acid chain: Small ribosomal subunit protein uS7 (194 aa).

The protein belongs to the universal ribosomal protein uS7 family. As to quaternary structure, part of the 30S ribosomal subunit.

Functionally, one of the primary rRNA binding proteins, it binds directly to 16S rRNA where it nucleates assembly of the head domain of the 30S subunit. Is located at the subunit interface close to the decoding center. The protein is Small ribosomal subunit protein uS7 of Archaeoglobus fulgidus (strain ATCC 49558 / DSM 4304 / JCM 9628 / NBRC 100126 / VC-16).